The following is a 141-amino-acid chain: Large ribosomal subunit protein uL16 (141 aa).

Basic residues predominate over residues 1–17; sequence MLQPKRTKYRKVQKGKM. A disordered region spans residues 1-29; the sequence is MLQPKRTKYRKVQKGKMKGNSQRGHELSN.

Belongs to the universal ribosomal protein uL16 family. Part of the 50S ribosomal subunit.

Functionally, binds 23S rRNA and is also seen to make contacts with the A and possibly P site tRNAs. The protein is Large ribosomal subunit protein uL16 of Flavobacterium psychrophilum (strain ATCC 49511 / DSM 21280 / CIP 103535 / JIP02/86).